The chain runs to 328 residues: Tetraacyldisaccharide 4'-kinase (328 aa).

An ATP-binding site is contributed by 55–62; it reads TAGGNGKT.

It belongs to the LpxK family.

It catalyses the reaction a lipid A disaccharide + ATP = a lipid IVA + ADP + H(+). It participates in glycolipid biosynthesis; lipid IV(A) biosynthesis; lipid IV(A) from (3R)-3-hydroxytetradecanoyl-[acyl-carrier-protein] and UDP-N-acetyl-alpha-D-glucosamine: step 6/6. In terms of biological role, transfers the gamma-phosphate of ATP to the 4'-position of a tetraacyldisaccharide 1-phosphate intermediate (termed DS-1-P) to form tetraacyldisaccharide 1,4'-bis-phosphate (lipid IVA). This Shigella boydii serotype 4 (strain Sb227) protein is Tetraacyldisaccharide 4'-kinase.